A 29-amino-acid polypeptide reads, in one-letter code: GLWSKIKEAGKAAVKAAGKAALGAVANSV.

Residue V29 is modified to Valine amide.

In terms of tissue distribution, expressed by the skin glands.

It is found in the secreted. In terms of biological role, has antimicrobial activity. This chain is Dermaseptin-J5, found in Phasmahyla jandaia (Jandaia leaf frog).